A 247-amino-acid polypeptide reads, in one-letter code: Adenosylcobinamide-GDP ribazoletransferase (247 aa).

A run of 6 helical transmembrane segments spans residues 31–51 (ILFY…VTCI), 55–75 (LPAL…TGGL), 109–129 (IGVL…YVLI), 135–155 (LFLI…FLTT), 183–203 (VLLL…SFLI), and 227–247 (AIEI…FYLV).

It belongs to the CobS family. The cofactor is Mg(2+).

Its subcellular location is the cell inner membrane. It carries out the reaction alpha-ribazole + adenosylcob(III)inamide-GDP = adenosylcob(III)alamin + GMP + H(+). It catalyses the reaction alpha-ribazole 5'-phosphate + adenosylcob(III)inamide-GDP = adenosylcob(III)alamin 5'-phosphate + GMP + H(+). It functions in the pathway cofactor biosynthesis; adenosylcobalamin biosynthesis; adenosylcobalamin from cob(II)yrinate a,c-diamide: step 7/7. In terms of biological role, joins adenosylcobinamide-GDP and alpha-ribazole to generate adenosylcobalamin (Ado-cobalamin). Also synthesizes adenosylcobalamin 5'-phosphate from adenosylcobinamide-GDP and alpha-ribazole 5'-phosphate. In Acinetobacter baumannii (strain ACICU), this protein is Adenosylcobinamide-GDP ribazoletransferase.